A 410-amino-acid chain; its full sequence is Probable serine/threonine-protein kinase PBL8 (410 aa).

The span at 1 to 10 (MGNCGTRDEA) shows a compositional bias: basic and acidic residues. Residues 1-45 (MGNCGTRDEAAVFTPQAQAQQLQKKHSRSVSDLSDPSTPRFRDDS) form a disordered region. A lipid anchor (N-myristoyl glycine) is attached at glycine 2. Residue cysteine 4 is the site of S-palmitoyl cysteine attachment. Position 58 is a phosphothreonine (threonine 58). The region spanning 69–350 (FRPDYILGEG…DVVETLEPLQ (282 aa)) is the Protein kinase domain. Residues 75–83 (LGEGGFGTV) and lysine 104 each bind ATP. The residue at position 149 (tyrosine 149) is a Phosphotyrosine. Aspartate 199 serves as the catalytic Proton acceptor. 2 positions are modified to phosphoserine: serine 203 and serine 233. Phosphothreonine occurs at positions 234 and 239. Phosphotyrosine is present on tyrosine 247.

This sequence belongs to the protein kinase superfamily. Ser/Thr protein kinase family. In terms of assembly, interacts with the Xanthomonas campestris effector XopAC/AvrAC.

The protein resides in the cell membrane. The enzyme catalyses L-seryl-[protein] + ATP = O-phospho-L-seryl-[protein] + ADP + H(+). The catalysed reaction is L-threonyl-[protein] + ATP = O-phospho-L-threonyl-[protein] + ADP + H(+). May be involved in plant defense signaling. This chain is Probable serine/threonine-protein kinase PBL8, found in Arabidopsis thaliana (Mouse-ear cress).